Reading from the N-terminus, the 264-residue chain is S-adenosylmethionine decarboxylase proenzyme (264 aa).

The active-site Schiff-base intermediate with substrate; via pyruvic acid is Ser-113. Ser-113 bears the Pyruvic acid (Ser); by autocatalysis mark. The Proton acceptor; for processing activity role is filled by His-118. Cys-141 serves as the catalytic Proton donor; for catalytic activity.

The protein belongs to the prokaryotic AdoMetDC family. Type 2 subfamily. Heterooctamer of four alpha and four beta chains arranged as a tetramer of alpha/beta heterodimers. The cofactor is pyruvate. In terms of processing, is synthesized initially as an inactive proenzyme. Formation of the active enzyme involves a self-maturation process in which the active site pyruvoyl group is generated from an internal serine residue via an autocatalytic post-translational modification. Two non-identical subunits are generated from the proenzyme in this reaction, and the pyruvate is formed at the N-terminus of the alpha chain, which is derived from the carboxyl end of the proenzyme. The post-translation cleavage follows an unusual pathway, termed non-hydrolytic serinolysis, in which the side chain hydroxyl group of the serine supplies its oxygen atom to form the C-terminus of the beta chain, while the remainder of the serine residue undergoes an oxidative deamination to produce ammonia and the pyruvoyl group blocking the N-terminus of the alpha chain.

It catalyses the reaction S-adenosyl-L-methionine + H(+) = S-adenosyl 3-(methylsulfanyl)propylamine + CO2. It participates in amine and polyamine biosynthesis; S-adenosylmethioninamine biosynthesis; S-adenosylmethioninamine from S-adenosyl-L-methionine: step 1/1. In terms of biological role, catalyzes the decarboxylation of S-adenosylmethionine to S-adenosylmethioninamine (dcAdoMet), the propylamine donor required for the synthesis of the polyamines spermine and spermidine from the diamine putrescine. The sequence is that of S-adenosylmethionine decarboxylase proenzyme from Pseudomonas paraeruginosa (strain DSM 24068 / PA7) (Pseudomonas aeruginosa (strain PA7)).